The following is a 338-amino-acid chain: Holliday junction branch migration complex subunit RuvB (338 aa).

Over residues 1-14 (MENDHGILSDHPSG) the composition is skewed to basic and acidic residues. The tract at residues 1-21 (MENDHGILSDHPSGEEESQVE) is disordered. Residues 3-185 (NDHGILSDHP…FGIVEHMNYY (183 aa)) are large ATPase domain (RuvB-L). ATP-binding positions include Leu-24, Arg-25, Gly-66, Lys-69, Thr-70, Thr-71, 132-134 (EDY), Arg-175, Tyr-185, and Arg-222. Thr-70 provides a ligand contact to Mg(2+). The interval 186 to 256 (TQDELTKIIF…IVKQALSLLQ (71 aa)) is small ATPAse domain (RuvB-S). The tract at residues 259–338 (DRGLDEIDRK…LGIEYPTDKN (80 aa)) is head domain (RuvB-H). The DNA site is built by Arg-314 and Arg-319.

Belongs to the RuvB family. In terms of assembly, homohexamer. Forms an RuvA(8)-RuvB(12)-Holliday junction (HJ) complex. HJ DNA is sandwiched between 2 RuvA tetramers; dsDNA enters through RuvA and exits via RuvB. An RuvB hexamer assembles on each DNA strand where it exits the tetramer. Each RuvB hexamer is contacted by two RuvA subunits (via domain III) on 2 adjacent RuvB subunits; this complex drives branch migration. In the full resolvosome a probable DNA-RuvA(4)-RuvB(12)-RuvC(2) complex forms which resolves the HJ.

The protein localises to the cytoplasm. The enzyme catalyses ATP + H2O = ADP + phosphate + H(+). The RuvA-RuvB-RuvC complex processes Holliday junction (HJ) DNA during genetic recombination and DNA repair, while the RuvA-RuvB complex plays an important role in the rescue of blocked DNA replication forks via replication fork reversal (RFR). RuvA specifically binds to HJ cruciform DNA, conferring on it an open structure. The RuvB hexamer acts as an ATP-dependent pump, pulling dsDNA into and through the RuvAB complex. RuvB forms 2 homohexamers on either side of HJ DNA bound by 1 or 2 RuvA tetramers; 4 subunits per hexamer contact DNA at a time. Coordinated motions by a converter formed by DNA-disengaged RuvB subunits stimulates ATP hydrolysis and nucleotide exchange. Immobilization of the converter enables RuvB to convert the ATP-contained energy into a lever motion, pulling 2 nucleotides of DNA out of the RuvA tetramer per ATP hydrolyzed, thus driving DNA branch migration. The RuvB motors rotate together with the DNA substrate, which together with the progressing nucleotide cycle form the mechanistic basis for DNA recombination by continuous HJ branch migration. Branch migration allows RuvC to scan DNA until it finds its consensus sequence, where it cleaves and resolves cruciform DNA. In Limosilactobacillus reuteri (strain DSM 20016) (Lactobacillus reuteri), this protein is Holliday junction branch migration complex subunit RuvB.